Here is a 158-residue protein sequence, read N- to C-terminus: 2-C-methyl-D-erythritol 2,4-cyclodiphosphate synthase (158 aa).

A divalent metal cation-binding residues include Asp-9 and His-11. 4-CDP-2-C-methyl-D-erythritol 2-phosphate is bound by residues 9–11 (DVH) and 35–36 (HS). Residue His-43 participates in a divalent metal cation binding. 4-CDP-2-C-methyl-D-erythritol 2-phosphate-binding positions include 57 to 59 (DIG), 62 to 66 (FPDTD), 133 to 136 (TTTE), Phe-140, and Arg-143.

The protein belongs to the IspF family. As to quaternary structure, homotrimer. A divalent metal cation is required as a cofactor.

It carries out the reaction 4-CDP-2-C-methyl-D-erythritol 2-phosphate = 2-C-methyl-D-erythritol 2,4-cyclic diphosphate + CMP. Its pathway is isoprenoid biosynthesis; isopentenyl diphosphate biosynthesis via DXP pathway; isopentenyl diphosphate from 1-deoxy-D-xylulose 5-phosphate: step 4/6. Its function is as follows. Involved in the biosynthesis of isopentenyl diphosphate (IPP) and dimethylallyl diphosphate (DMAPP), two major building blocks of isoprenoid compounds. Catalyzes the conversion of 4-diphosphocytidyl-2-C-methyl-D-erythritol 2-phosphate (CDP-ME2P) to 2-C-methyl-D-erythritol 2,4-cyclodiphosphate (ME-CPP) with a corresponding release of cytidine 5-monophosphate (CMP). This is 2-C-methyl-D-erythritol 2,4-cyclodiphosphate synthase from Actinobacillus pleuropneumoniae serotype 7 (strain AP76).